The chain runs to 1123 residues: Telomerase reverse transcriptase (1123 aa).

Residues 1–230 form an RNA-interacting domain 1 region; the sequence is MPRAPRCRAV…ARRRRGSPGS (230 aa). Residues 58–197 are GQ motif; that stretch reads VPWGARPPPA…APGLPGLPGL (140 aa). Residues 137–141 are required for regulating specificity for telomeric DNA and for processivity for primer elongation; it reads WGLLL. The interval 202–311 is disordered; it reads AGAGASADLR…GVPHDPAHPE (110 aa). The Bipartite nuclear localization signal motif lies at 222–240; the sequence is RRRRGSPGSGVPLAKRPRR. Residue Ser227 is modified to Phosphoserine; by PKB/AKT1. The linker stretch occupies residues 231-308; sequence GVPLAKRPRR…GPQGVPHDPA (78 aa). Positions 260 to 279 are enriched in low complexity; it reads PPVSEAPAVTPAVAASPAAS. An RNA-interacting domain 2 region spans residues 309–539; that stretch reads HPETKRFLYC…LARFLVLVDG (231 aa). A TFLY; involved in RNA binding motif is present at residues 312-317; sequence TKRFLY. A QFP motif region spans residues 360–510; it reads ARRMRRLPAR…MKVRDCTWLH (151 aa). Residues 381–401 form a CP motif region; it reads LGNHARCPYRALLRTHCPLRA. Position 446 is a phosphoserine; by DYRK2 (Ser446). Residues 595-926 enclose the Reverse transcriptase domain; that stretch reads EVRRHREARP…CLFPWCGLLL (332 aa). Tyr697 bears the Phosphotyrosine; by SRC-type Tyr-kinases mark. Positions 702, 859, and 860 each coordinate Mg(2+). The segment at 905–919 is required for oligomerization; sequence LGSAAPLQLPAHCLF. Residues 921 to 925 form a primer grip sequence region; that stretch reads WCGLL. Positions 927 to 1123 are CTE; the sequence is DTRTLEVSCD…LTADFKTILD (197 aa).

The protein belongs to the reverse transcriptase family. Telomerase subfamily. As to quaternary structure, catalytic component of the telomerase holoenzyme complex composed of one molecule of TERT, one molecule of WRAP53/TCAB1, two molecules of H/ACA ribonucleoprotein complex subunits DKC1, NOP10, NHP2 and GAR1, and a telomerase RNA template component (TERC). The telomerase holoenzyme complex is associated with TEP1, SMG6/EST1A and POT1. The molecular chaperone HSP90/P23 complex is required for correct assembly and stabilization of the active telomerase. Interacts directly with HSP90A and PTGES3. Interacts with HSPA1A; the interaction occurs in the absence of TERC and dissociates once the complex has formed. Interacts with RAN; the interaction promotes nuclear export of TERT. Interacts with XPO1. Interacts with PTPN11; the interaction retains TERT in the nucleus. Interacts with NCL (via RRM1 and C-terminal RRM4/Arg/Gly-rich domains); the interaction is important for nucleolar localization of TERT. Interacts with SMARCA4 (via the bromodomain); the interaction regulates Wnt-mediated signaling. Interacts with MCRS1 (isoform MCRS2); the interaction inhibits in vitro telomerase activity. Interacts with PIF1; the interaction has no effect on the elongation activity of TERT. Interacts with PML; the interaction recruits TERT to PML bodies and inhibits telomerase activity. Interacts with GNL3L. Interacts with isoform 1 and isoform 2 of NVL. Interacts with DHX36. Interacts with ATF7. Post-translationally, phosphorylation at Tyr-697 under oxidative stress leads to translocation of TERT to the cytoplasm and reduces its antiapoptotic activity. Dephosphorylated by SHP2/PTPN11 leading to nuclear retention. Phosphorylation at Ser-227 by the AKT pathway promotes nuclear location. Phosphorylation at the G2/M phase at Ser-446 by DYRK2 promotes ubiquitination by the EDVP complex and degradation. Ubiquitinated by the EDVP complex, a E3 ligase complex following phosphorylation at Ser-446 by DYRK2. Ubiquitinated leads to proteasomal degradation.

The protein resides in the nucleus. It localises to the nucleolus. Its subcellular location is the nucleoplasm. The protein localises to the chromosome. It is found in the telomere. The protein resides in the cytoplasm. It localises to the PML body. It catalyses the reaction DNA(n) + a 2'-deoxyribonucleoside 5'-triphosphate = DNA(n+1) + diphosphate. Telomerase is a ribonucleoprotein enzyme essential for the replication of chromosome termini in most eukaryotes. Active in progenitor and cancer cells. Inactive, or very low activity, in normal somatic cells. Catalytic component of the teleromerase holoenzyme complex whose main activity is the elongation of telomeres by acting as a reverse transcriptase that adds simple sequence repeats to chromosome ends by copying a template sequence within the RNA component of the enzyme. Catalyzes the RNA-dependent extension of 3'-chromosomal termini with the 6-nucleotide telomeric repeat unit, 5'-TTAGGG-3'. The catalytic cycle involves primer binding, primer extension and release of product once the template boundary has been reached or nascent product translocation followed by further extension. More active on substrates containing 2 or 3 telomeric repeats. Telomerase activity is regulated by a number of factors including telomerase complex-associated proteins, chaperones and polypeptide modifiers. Modulates Wnt signaling. Plays important roles in aging and antiapoptosis. This chain is Telomerase reverse transcriptase (TERT), found in Canis lupus familiaris (Dog).